Reading from the N-terminus, the 606-residue chain is Cryptochrome-1 (606 aa).

Residues 3–132 (VNAVHWFRKG…EVIVRISHTL (130 aa)) enclose the Photolyase/cryptochrome alpha/beta domain. Residue Lys-11 forms a Glycyl lysine isopeptide (Lys-Gly) (interchain with G-Cter in ubiquitin) linkage. The LIR 1 motif lies at 50–54 (NRWRF). Ser-71 is modified (phosphoserine; by AMPK). The short motif at 82-87 (DVFPRL) is the LIR 2 element. A Glycyl lysine isopeptide (Lys-Gly) (interchain with G-Cter in ubiquitin) cross-link involves residue Lys-107. The LIR 3 signature appears at 151–156 (KRFQTL). A Glycyl lysine isopeptide (Lys-Gly) (interchain with G-Cter in ubiquitin) cross-link involves residue Lys-159. Ser-247 carries the phosphoserine; by MAPK modification. Ser-252 is an FAD binding site. 2 consecutive short sequence motifs (LIR) follow at residues 255-260 (LRFGCL) and 271-276 (DLYKKV). Ser-280 carries the post-translational modification Phosphoserine; by AMPK. The LIR 6 signature appears at 285–290 (SLYGQL). Gln-289 provides a ligand contact to FAD. Residue Lys-329 forms a Glycyl lysine isopeptide (Lys-Gly) (interchain with G-Cter in ubiquitin) linkage. Residues 335–339 (TGFPW) carry the LIR 7 motif. His-355 is an FAD binding site. The required for inhibition of CLOCK-BMAL1-mediated transcription stretch occupies residues 371 to 470 (WISWEEGMKV…LIGVNYPKPM (100 aa)). The short motif at 379–384 (KVFEEL) is the LIR 8 element. 387-389 (DAD) provides a ligand contact to FAD. 3 short sequence motifs (LIR) span residues 395–400 (GSWMWL), 411–416 (HCYCPV), and 430–435 (RRYLPV). The interval 471-493 (VNHAEASRLNIERMKQIYQQLSR) is interaction with TIMELESS. Lys-485 participates in a covalent cross-link: Glycyl lysine isopeptide (Lys-Gly) (interchain with G-Cter in ubiquitin). Short sequence motifs (LIR) lie at residues 486-491 (QIYQQL) and 492-497 (SRYRGL). Positions 559-606 (YAHGDSQQTHSLKQGRSSAGTGLSSGKRPSQEEDAQSVGPKVQRQSSN) are disordered. Residues 563 to 586 (DSQQTHSLKQGRSSAGTGLSSGKR) are compositionally biased toward polar residues. Lys-585 is covalently cross-linked (Glycyl lysine isopeptide (Lys-Gly) (interchain with G-Cter in ubiquitin)). Phosphoserine is present on Ser-588.

This sequence belongs to the DNA photolyase class-1 family. As to quaternary structure, component of the circadian core oscillator, which includes the CRY proteins, CLOCK or NPAS2, BMAL1 or BMAL2, CSNK1D and/or CSNK1E, TIMELESS, and the PER proteins. Interacts directly with TIMELESS. Interacts directly with PER1 and PER2; interaction with PER2 inhibits its ubiquitination and vice versa. Interacts with PER3. Interacts with FBXL21. Interacts with FBXL3. Interacts with PPP5C (via TPR repeats). Interacts with CLOCK-BMAL1 independently of PER2 and DNA. Interacts with HDAC1, HDAC2 and SIN3B. Interacts with nuclear receptors AR, NR1D1, NR3C1/GR, RORA and RORC; the interaction with at least NR3C1/GR is ligand dependent. Interacts with PRKDC. Interacts with the G protein subunit alpha GNAS; the interaction may block GPCR-mediated regulation of cAMP concentrations. Interacts with PRMT5. Interacts with EZH2. Interacts with MYBBP1A, DOCK7, HNRNPU, RPL7A, RPL8 and RPS3. Interacts with MAP1LC3B. Interacts with CLOCK. Interacts with BMAL1. Interacts weakly with HDAC3; this interaction is enhanced in the presence of FBXL3. Interacts with TRIM28, KCTD5 and DDB1. Interacts with DTL. Interacts with DDB1-CUL4A complex. Interacts with FOXO1. Interacts with PSMD2 in a KDM8-dependent manner. Interacts with KDM8 in a FBXL3-dependent manner. Interacts with PPARA. Interacts with PPARG in a ligand-dependent manner. Interacts with PPARD (via domain NR LBD) in a ligand-dependent manner. Interacts with NR1I2 (via domain NR LBD) in a ligand-dependent manner. Interacts with NR1I3, VDR and HNF4A. The cofactor is FAD. It depends on (6R)-5,10-methylene-5,6,7,8-tetrahydrofolate as a cofactor. Phosphorylation on Ser-247 by MAPK is important for the inhibition of CLOCK-BMAL1-mediated transcriptional activity. Phosphorylation by CSNK1E requires interaction with PER1 or PER2. Phosphorylation at Ser-71 and Ser-280 by AMPK decreases protein stability. Phosphorylation at Ser-588 exhibits a robust circadian rhythm with a peak at CT8, increases protein stability, prevents SCF(FBXL3)-mediated degradation and is antagonized by interaction with PRKDC. Post-translationally, ubiquitinated by the SCF(FBXL3) and SCF(FBXL21) complexes, regulating the balance between degradation and stabilization. The SCF(FBXL3) complex is mainly nuclear and mediates ubiquitination and subsequent degradation of CRY1. In contrast, cytoplasmic SCF(FBXL21) complex-mediated ubiquitination leads to stabilize CRY1 and counteract the activity of the SCF(FBXL3) complex. The SCF(FBXL3) and SCF(FBXL21) complexes probably mediate ubiquitination at different Lys residues. Ubiquitination at Lys-11 and Lys-107 are specifically ubiquitinated by the SCF(FBXL21) complex but not by the SCF(FBXL3) complex. Ubiquitination may be inhibited by PER2. Deubiquitinated by USP7. In terms of processing, undergoes autophagy-mediated degradation in the liver in a time-dependent manner. Autophagic degradation of CRY1 (an inhibitor of gluconeogenesis) occurs during periods of reduced feeding allowing induction of gluconeogenesis and maintenance of blood glucose levels. As to expression, expressed in cones, amacrine cells, and retinal ganglion cells of the retina (at protein level). Expressed in all tissues examined including heart, brain, spleen, lung, liver, skeletal muscle, kidney and testis. Higher levels in brain, liver and testis. In the retina, highly expressed in the ganglion cell layer (GCL) and in the inner nuclear layer (INL). Evenly distributed in central and peripheral retina. In the brain, highly expressed in the suprachiasmatic nucleus (SCN). High levels in cerebral cortical layers particularly in the pyramidial cell layer of the hippocampus, the granular cell layer of the dentate gyrus (DG) and the pyramidal cell layer of the piriform cortex (PFC).

It localises to the cytoplasm. The protein localises to the nucleus. Its activity is regulated as follows. KL001 (N-[3-(9H-carbazol-9-yl)-2-hydroxypropyl]-N-(2-furanylmethyl)-methanesulfonamide) binds to CRY1 and stabilizes it by inhibiting FBXL3- and ubiquitin-dependent degradation of CRY1 resulting in lengthening of the circadian periods. KL001-mediated CRY1 stabilization can inhibit glucagon-induced gluconeogenesis in primary hepatocytes. Transcriptional repressor which forms a core component of the circadian clock. The circadian clock, an internal time-keeping system, regulates various physiological processes through the generation of approximately 24 hour circadian rhythms in gene expression, which are translated into rhythms in metabolism and behavior. It is derived from the Latin roots 'circa' (about) and 'diem' (day) and acts as an important regulator of a wide array of physiological functions including metabolism, sleep, body temperature, blood pressure, endocrine, immune, cardiovascular, and renal function. Consists of two major components: the central clock, residing in the suprachiasmatic nucleus (SCN) of the brain, and the peripheral clocks that are present in nearly every tissue and organ system. Both the central and peripheral clocks can be reset by environmental cues, also known as Zeitgebers (German for 'timegivers'). The predominant Zeitgeber for the central clock is light, which is sensed by retina and signals directly to the SCN. The central clock entrains the peripheral clocks through neuronal and hormonal signals, body temperature and feeding-related cues, aligning all clocks with the external light/dark cycle. Circadian rhythms allow an organism to achieve temporal homeostasis with its environment at the molecular level by regulating gene expression to create a peak of protein expression once every 24 hours to control when a particular physiological process is most active with respect to the solar day. Transcription and translation of core clock components (CLOCK, NPAS2, BMAL1, BMAL2, PER1, PER2, PER3, CRY1 and CRY2) plays a critical role in rhythm generation, whereas delays imposed by post-translational modifications (PTMs) are important for determining the period (tau) of the rhythms (tau refers to the period of a rhythm and is the length, in time, of one complete cycle). A diurnal rhythm is synchronized with the day/night cycle, while the ultradian and infradian rhythms have a period shorter and longer than 24 hours, respectively. Disruptions in the circadian rhythms contribute to the pathology of cardiovascular diseases, cancer, metabolic syndromes and aging. A transcription/translation feedback loop (TTFL) forms the core of the molecular circadian clock mechanism. Transcription factors, CLOCK or NPAS2 and BMAL1 or BMAL2, form the positive limb of the feedback loop, act in the form of a heterodimer and activate the transcription of core clock genes and clock-controlled genes (involved in key metabolic processes), harboring E-box elements (5'-CACGTG-3') within their promoters. The core clock genes: PER1/2/3 and CRY1/2 which are transcriptional repressors form the negative limb of the feedback loop and interact with the CLOCK|NPAS2-BMAL1|BMAL2 heterodimer inhibiting its activity and thereby negatively regulating their own expression. This heterodimer also activates nuclear receptors NR1D1/2 and RORA/B/G, which form a second feedback loop and which activate and repress BMAL1 transcription, respectively. CRY1 and CRY2 have redundant functions but also differential and selective contributions at least in defining the pace of the SCN circadian clock and its circadian transcriptional outputs. More potent transcriptional repressor in cerebellum and liver than CRY2, though more effective in lengthening the period of the SCN oscillator. On its side, CRY2 seems to play a critical role in tuning SCN circadian period by opposing the action of CRY1. With CRY2, is dispensable for circadian rhythm generation but necessary for the development of intercellular networks for rhythm synchrony. Capable of translocating circadian clock core proteins such as PER proteins to the nucleus. Interacts with CLOCK-BMAL1 independently of PER proteins and is found at CLOCK-BMAL1-bound sites, suggesting that CRY may act as a molecular gatekeeper to maintain CLOCK-BMAL1 in a poised and repressed state until the proper time for transcriptional activation. Represses the CLOCK-BMAL1 induced transcription of BHLHE40/DEC1, ATF4, MTA1, KLF10 and NAMPT. May repress circadian target genes expression in collaboration with HDAC1 and HDAC2 through histone deacetylation. Mediates the clock-control activation of ATR and modulates ATR-mediated DNA damage checkpoint. In liver, mediates circadian regulation of cAMP signaling and gluconeogenesis by binding to membrane-coupled G proteins and blocking glucagon-mediated increases in intracellular cAMP concentrations and CREB1 phosphorylation. Inhibits hepatic gluconeogenesis by decreasing nuclear FOXO1 levels that down-regulates gluconeogenic gene expression. Besides its role in the maintenance of the circadian clock, is also involved in the regulation of other processes. Represses glucocorticoid receptor NR3C1/GR-induced transcriptional activity by binding to glucocorticoid response elements (GREs). Plays a key role in glucose and lipid metabolism modulation, in part, through the transcriptional regulation of genes involved in these pathways, such as LEP or ACSL4. Represses PPARD and its target genes in the skeletal muscle and limits exercise capacity. Plays an essential role in the generation of circadian rhythms in the retina. Represses the transcriptional activity of NR1I2. The chain is Cryptochrome-1 (Cry1) from Mus musculus (Mouse).